A 340-amino-acid chain; its full sequence is Heat-inducible transcription repressor HrcA (340 aa).

This sequence belongs to the HrcA family.

In terms of biological role, negative regulator of class I heat shock genes (grpE-dnaK-dnaJ and groELS operons). Prevents heat-shock induction of these operons. The chain is Heat-inducible transcription repressor HrcA from Burkholderia ambifaria (strain MC40-6).